Here is a 1037-residue protein sequence, read N- to C-terminus: PH and SEC7 domain-containing protein 3 (1037 aa).

The disordered stretch occupies residues 37–70 (EEKTPDSSDHGGSTLLPPTVTNEFPEYGTMEEGG). At serine 76 the chain carries Phosphoserine. Disordered stretches follow at residues 169–189 (TASH…GKSP), 236–255 (RVPE…HNPV), 262–284 (REQR…SMGR), 304–335 (EAES…ACGV), and 353–375 (APSE…ESGE). A compositionally biased stretch (low complexity) spans 237–251 (VPESACPVSSSSAGS). Residues 262-277 (REQRSDLGREHPRGYD) show a composition bias toward basic and acidic residues. Positions 515–723 (NSVYTRGPQE…KALYNSIKNE (209 aa)) constitute an SEC7 domain. Basic and acidic residues predominate over residues 730–747 (DDEEKKKSPSEGTDEKAN). The segment at 730 to 762 (DDEEKKKSPSEGTDEKANGTHPKTISRIGSTTN) is disordered. The span at 750 to 762 (HPKTISRIGSTTN) shows a compositional bias: polar residues. At serine 759 the chain carries Phosphoserine. The region spanning 774–887 (AVYKSGFLAR…WINKINCVAA (114 aa)) is the PH domain. Residues 911–941 (ATTTKLSQEEQLKSHESKLKQITTELAEHRS) are a coiled coil. The tract at residues 984–1037 (LLTTDGNEPVGLKKSHSSPSLNPDASPVTAKVKRNVSERKDHRPETPGIKQKVT) is disordered. 5 positions are modified to phosphoserine: serine 998, serine 1000, serine 1001, serine 1003, and serine 1009. The segment covering 1018-1028 (NVSERKDHRPE) has biased composition (basic and acidic residues).

As to expression, ubiquitously expressed, with highest levels in liver. Present in brain, with highest levels in olfactory bulb, cortex, hippocampal pyramidal cell layer and cerebellar granule cell layer (at protein level).

It is found in the cell membrane. Its subcellular location is the cell projection. The protein localises to the ruffle membrane. The protein resides in the postsynaptic density. Guanine nucleotide exchange factor for ARF6. This Mus musculus (Mouse) protein is PH and SEC7 domain-containing protein 3 (Psd3).